Here is a 274-residue protein sequence, read N- to C-terminus: Penicillin-insensitive murein endopeptidase (274 aa).

Positions 1 to 19 (MNKTAIALLALLASSASLA) are cleaved as a signal peptide. Disulfide bonds link C44–C265, C187–C235, and C216–C223. Zn(2+) is bound by residues H110, H113, D120, D147, H150, and H211. Positions 227–274 (PLPPPGDGCGAELQSWFEPPKPGTTKPEKKTPPPLPPSCQALLDEHVI) are disordered.

This sequence belongs to the peptidase M74 family. Dimer. Requires Zn(2+) as cofactor.

Its subcellular location is the periplasm. Its function is as follows. Murein endopeptidase that cleaves the D-alanyl-meso-2,6-diamino-pimelyl amide bond that connects peptidoglycan strands. Likely plays a role in the removal of murein from the sacculus. This is Penicillin-insensitive murein endopeptidase from Escherichia coli O17:K52:H18 (strain UMN026 / ExPEC).